A 613-amino-acid polypeptide reads, in one-letter code: Transcription factor Sp2 (613 aa).

The interval 1 to 32 (MSDPQTSMAATAAVSPSDYLQPAASTTQDSQP) is disordered. A compositionally biased stretch (polar residues) spans 23–32 (AASTTQDSQP). S78 is subject to Phosphoserine. 2 disordered regions span residues 170-197 (SPSS…AQSG) and 225-255 (PGAA…LPAA). Residues 185 to 197 (QKSSTTTTPAQSG) are compositionally biased toward polar residues. The 9aaTAD; inactive signature appears at 361–369 (GEVQTVLVQ). Over residues 374-392 (ATAATASTTTCSSPASRAA) the composition is skewed to low complexity. Residues 374-402 (ATAATASTTTCSSPASRAAHLSGTSKKHS) are disordered. C2H2-type zinc fingers lie at residues 525-549 (HVCH…VRLH), 555-579 (FVCN…ARTH), and 585-607 (FECA…YKTH).

The protein belongs to the Sp1 C2H2-type zinc-finger protein family.

It is found in the nucleus. Functionally, binds to GC box promoters elements and selectively activates mRNA synthesis from genes that contain functional recognition sites. This chain is Transcription factor Sp2 (SP2), found in Bos taurus (Bovine).